The following is a 311-amino-acid chain: Pyrimidine-specific ribonucleoside hydrolase RihA (311 aa).

Residue His240 is part of the active site.

The protein belongs to the IUNH family. RihA subfamily.

Its function is as follows. Hydrolyzes cytidine or uridine to ribose and cytosine or uracil, respectively. In Klebsiella pneumoniae (strain 342), this protein is Pyrimidine-specific ribonucleoside hydrolase RihA.